The sequence spans 587 residues: ATF/CREB activator 2 (587 aa).

Disordered regions lie at residues 1–62, 123–144, 169–195, and 381–423; these read MFTG…SRSL, LRQQ…EEES, NLSQ…SNIA, and TGGE…IPGT. Residues 16–29 are compositionally biased toward basic and acidic residues; that stretch reads KQKDNNKRGIDDTS. 2 stretches are compositionally biased toward low complexity: residues 39–57 and 123–134; these read SVSD…NNSA and LRQQQQQDQRQQ. 2 positions are modified to phosphoserine: Ser171 and Ser179. Residues 385–395 are compositionally biased toward basic and acidic residues; the sequence is NRGKSALRESH. The segment covering 396–418 has biased composition (polar residues); that stretch reads SNPSFTPKSQGSHLNLAANTQGN. Ser399 is subject to Phosphoserine. The 64-residue stretch at 425–488 folds into the bZIP domain; the sequence is AWKRARLLER…SKFKKFSKIH (64 aa). Residues 427 to 447 are basic motif; it reads KRARLLERNRIAASKCRQRKK. Positions 453–467 are leucine-zipper; the sequence is LQKEFNEIKDENRIL. The interval 552-587 is disordered; that stretch reads SQRFGSDTDDDDIDLKPVEGGKDPDNQSLPNSEKIK. At Ser557 the chain carries Phosphoserine. Phosphothreonine is present on Thr559. Over residues 565-576 the composition is skewed to basic and acidic residues; sequence DLKPVEGGKDPD. The span at 577–587 shows a compositional bias: polar residues; sequence NQSLPNSEKIK.

The protein belongs to the bZIP family.

It is found in the nucleus. Its function is as follows. Transcriptional activator of promoters containing ATF/CREB sites. Can independently stimulate transcription through ATF/CREB sites. Important for a variety of biological functions including growth on non-optimal carbon sources. The chain is ATF/CREB activator 2 (CST6) from Saccharomyces cerevisiae (strain ATCC 204508 / S288c) (Baker's yeast).